The chain runs to 179 residues: Cytochrome b6-f complex iron-sulfur subunit 1 (179 aa).

Residues 21–43 (LLTFGTVTGVALGALYPVVNYFI) traverse the membrane as a helical segment. The region spanning 61 to 162 (GNDVSVSKFL…AKTENDKIVL (102 aa)) is the Rieske domain. [2Fe-2S] cluster contacts are provided by Cys-108, His-110, Cys-126, and His-129. Cys-113 and Cys-128 form a disulfide bridge.

This sequence belongs to the Rieske iron-sulfur protein family. In terms of assembly, the 4 large subunits of the cytochrome b6-f complex are cytochrome b6, subunit IV (17 kDa polypeptide, PetD), cytochrome f and the Rieske protein, while the 4 small subunits are PetG, PetL, PetM and PetN. The complex functions as a dimer. [2Fe-2S] cluster is required as a cofactor.

The protein localises to the cellular thylakoid membrane. The catalysed reaction is 2 oxidized [plastocyanin] + a plastoquinol + 2 H(+)(in) = 2 reduced [plastocyanin] + a plastoquinone + 4 H(+)(out). Functionally, component of the cytochrome b6-f complex, which mediates electron transfer between photosystem II (PSII) and photosystem I (PSI), cyclic electron flow around PSI, and state transitions. This chain is Cytochrome b6-f complex iron-sulfur subunit 1, found in Trichormus variabilis (strain ATCC 29413 / PCC 7937) (Anabaena variabilis).